The following is a 94-amino-acid chain: Acylphosphatase (94 aa).

An Acylphosphatase-like domain is found at 8 to 94 (RLTAWVHGRV…REQITGFHER (87 aa)). Residues arginine 23 and asparagine 41 contribute to the active site.

This sequence belongs to the acylphosphatase family.

It catalyses the reaction an acyl phosphate + H2O = a carboxylate + phosphate + H(+). This Mycobacterium sp. (strain JLS) protein is Acylphosphatase (acyP).